The following is a 252-amino-acid chain: 5'-nucleotidase SurE (252 aa).

The a divalent metal cation site is built by Asp-8, Asp-9, Ser-39, and Asn-95.

This sequence belongs to the SurE nucleotidase family. The cofactor is a divalent metal cation.

It is found in the cytoplasm. The enzyme catalyses a ribonucleoside 5'-phosphate + H2O = a ribonucleoside + phosphate. Its function is as follows. Nucleotidase that shows phosphatase activity on nucleoside 5'-monophosphates. The polypeptide is 5'-nucleotidase SurE (Thermoanaerobacter sp. (strain X514)).